The sequence spans 269 residues: Tryptophan synthase alpha chain (269 aa).

Active-site proton acceptor residues include E49 and D60.

This sequence belongs to the TrpA family. Tetramer of two alpha and two beta chains.

The catalysed reaction is (1S,2R)-1-C-(indol-3-yl)glycerol 3-phosphate + L-serine = D-glyceraldehyde 3-phosphate + L-tryptophan + H2O. It participates in amino-acid biosynthesis; L-tryptophan biosynthesis; L-tryptophan from chorismate: step 5/5. In terms of biological role, the alpha subunit is responsible for the aldol cleavage of indoleglycerol phosphate to indole and glyceraldehyde 3-phosphate. The chain is Tryptophan synthase alpha chain from Enterobacter sp. (strain 638).